The sequence spans 491 residues: Arginine decarboxylase (491 aa).

The residue at position 227 (Lys-227) is an N6-(pyridoxal phosphate)lysine.

It belongs to the Orn/Lys/Arg decarboxylase class-I family. The cofactor is pyridoxal 5'-phosphate.

The protein resides in the cytoplasm. The enzyme catalyses L-arginine + H(+) = agmatine + CO2. It functions in the pathway amine and polyamine biosynthesis; agmatine biosynthesis; agmatine from L-arginine: step 1/1. Its function is as follows. Catalyzes the formation of agmatine from arginine. The protein is Arginine decarboxylase (speA) of Halalkalibacterium halodurans (strain ATCC BAA-125 / DSM 18197 / FERM 7344 / JCM 9153 / C-125) (Bacillus halodurans).